The following is a 655-amino-acid chain: MKKFKLNSPYKPLGDQPKAINSLVDGINKGEKEQTLLGVTGSGKTFTMANVIEKVQKPTLVISHNKTLAAQLYEEFKEFFPDNAVEYFVSYYDYYQPEAYVPRTDTFIDKESSVNEEIDIMRHSATQSLLSRDDVIVVSSVSCIYGIGSPEDYGEFAFGIAVGDNYDRSDIIRKLVFMQYERNDIEFARGHFRVRGDVIEINPVHGTPPVRVELFGDEIDAISLIDKVTGKKTESLKRYMIFPAKHFVVGQDKMDTAIRNISDELDERLNEFNLSNKLLEAQRLEQRTRFDIEMLQEMGYCPGVENYSMHLSGRKWGEKPYSLLKYFPEDYLTIIDESHVTLPQIRGMYNGDRARKETLVEHGFRLPSAKENRPLRFDEFESSINQIIYVSATPGAYELSRSSNIVEQIIRPTGLVDPEVIIRPVKGQVEDLLGEVKKRAKKDERVLVTTLTKKMAEDLTDYYAKIGVKVRYMHSEIDTLERIDIVDDLRRGTFDVLVGVNLLREGLDLPEVSLVAILDADKEGFLRNETSLIQTIGRAARNINGQVIMYVDEMTDSVKNATAITSKRRKIQIKYNEKHGIVPKTTKRALKDKKVAEDLDIEGTDISKIPKDELRLLISDLENDMKEAAAKLDFERAASLRDQIATLKGLKKDSS.

The region spanning 25-181 (DGINKGEKEQ…IRKLVFMQYE (157 aa)) is the Helicase ATP-binding domain. 38 to 45 (GVTGSGKT) contacts ATP. The short motif at 91-114 (YYDYYQPEAYVPRTDTFIDKESSV) is the Beta-hairpin element. Residues 428-590 (QVEDLLGEVK…IVPKTTKRAL (163 aa)) enclose the Helicase C-terminal domain. The region spanning 615–650 (RLLISDLENDMKEAAAKLDFERAASLRDQIATLKGL) is the UVR domain.

This sequence belongs to the UvrB family. As to quaternary structure, forms a heterotetramer with UvrA during the search for lesions. Interacts with UvrC in an incision complex.

It is found in the cytoplasm. In terms of biological role, the UvrABC repair system catalyzes the recognition and processing of DNA lesions. A damage recognition complex composed of 2 UvrA and 2 UvrB subunits scans DNA for abnormalities. Upon binding of the UvrA(2)B(2) complex to a putative damaged site, the DNA wraps around one UvrB monomer. DNA wrap is dependent on ATP binding by UvrB and probably causes local melting of the DNA helix, facilitating insertion of UvrB beta-hairpin between the DNA strands. Then UvrB probes one DNA strand for the presence of a lesion. If a lesion is found the UvrA subunits dissociate and the UvrB-DNA preincision complex is formed. This complex is subsequently bound by UvrC and the second UvrB is released. If no lesion is found, the DNA wraps around the other UvrB subunit that will check the other stand for damage. This Methanobrevibacter smithii (strain ATCC 35061 / DSM 861 / OCM 144 / PS) protein is UvrABC system protein B.